A 68-amino-acid polypeptide reads, in one-letter code: Large ribosomal subunit protein uL29c (68 aa).

Belongs to the universal ribosomal protein uL29 family.

The protein localises to the plastid. It is found in the chloroplast. This Pyropia yezoensis (Susabi-nori) protein is Large ribosomal subunit protein uL29c.